The chain runs to 189 residues: Transcription factor FapR (189 aa).

Belongs to the FapR family.

In terms of biological role, transcriptional factor involved in regulation of membrane lipid biosynthesis by repressing genes involved in fatty acid and phospholipid metabolism. The polypeptide is Transcription factor FapR (Listeria innocua serovar 6a (strain ATCC BAA-680 / CLIP 11262)).